Consider the following 1913-residue polypeptide: GREB1-like protein (1913 aa).

The segment covering 86–96 has biased composition (acidic residues); that stretch reads MEDDEDEEEMS. Disordered regions lie at residues 86–111, 281–309, 1097–1157, and 1179–1207; these read MEDD…KPAP, NGTS…SPRP, EAER…TSSI, and DSLD…LAWS. Residues 289 to 301 show a composition bias toward low complexity; that stretch reads KSSSCSSTPSRPG. Polar residues predominate over residues 1118-1157; it reads PQSNSSAVTGTSGSIMENGVSSSSTAGKPQQQLLTPTSSI. The segment covering 1187 to 1200 has biased composition (low complexity); it reads SSTTSKPSSSSSSS. The chain crosses the membrane as a helical span at residues 1832 to 1852; the sequence is GVFFSGLLLYLCDSFVGADLL.

The protein belongs to the GREB1 family. In terms of tissue distribution, expressed in the inner ear, with a high presence in the spiral ganglia, cochlear nerve bundles, and hair cells.

The protein resides in the membrane. Plays a major role in early metanephros and genital development. The chain is GREB1-like protein (Greb1l) from Mus musculus (Mouse).